A 465-amino-acid polypeptide reads, in one-letter code: tRNA modification GTPase MnmE (465 aa).

(6S)-5-formyl-5,6,7,8-tetrahydrofolate contacts are provided by arginine 27, glutamate 91, and arginine 130. The region spanning 227-386 (GLSTAIIGRP…LEAKIADLFF (160 aa)) is the TrmE-type G domain. Asparagine 237 contacts K(+). GTP is bound by residues 237–242 (NVGKSS), 256–262 (TDIAGTT), and 281–284 (DTAG). Serine 241 contributes to the Mg(2+) binding site. K(+) is bound by residues threonine 256, isoleucine 258, and threonine 261. Threonine 262 serves as a coordination point for Mg(2+). Lysine 465 lines the (6S)-5-formyl-5,6,7,8-tetrahydrofolate pocket.

The protein belongs to the TRAFAC class TrmE-Era-EngA-EngB-Septin-like GTPase superfamily. TrmE GTPase family. Homodimer. Heterotetramer of two MnmE and two MnmG subunits. It depends on K(+) as a cofactor.

The protein resides in the cytoplasm. Exhibits a very high intrinsic GTPase hydrolysis rate. Involved in the addition of a carboxymethylaminomethyl (cmnm) group at the wobble position (U34) of certain tRNAs, forming tRNA-cmnm(5)s(2)U34. This chain is tRNA modification GTPase MnmE, found in Enterococcus faecalis (strain ATCC 700802 / V583).